The primary structure comprises 73 residues: UPF0352 protein HSM_0097 (73 aa).

This sequence belongs to the UPF0352 family.

The protein is UPF0352 protein HSM_0097 of Histophilus somni (strain 2336) (Haemophilus somnus).